The primary structure comprises 487 residues: Siroheme synthase (487 aa).

Positions 1–203 (MNTFPLFFKL…GRSVEAEQAL (203 aa)) are precorrin-2 dehydrogenase /sirohydrochlorin ferrochelatase. Residues 22 to 23 (EV) and 43 to 44 (PQ) each bind NAD(+). Phosphoserine is present on Ser128. The uroporphyrinogen-III C-methyltransferase stretch occupies residues 229-487 (GEVYIVGAGP…DQQAHALNML (259 aa)). An S-adenosyl-L-methionine-binding site is contributed by Pro238. The active-site Proton acceptor is Asp261. Lys283 functions as the Proton donor in the catalytic mechanism. Residues 314-316 (GGD), Val319, 344-345 (TA), Met396, and Ala425 contribute to the S-adenosyl-L-methionine site.

The protein in the N-terminal section; belongs to the precorrin-2 dehydrogenase / sirohydrochlorin ferrochelatase family. This sequence in the C-terminal section; belongs to the precorrin methyltransferase family.

It catalyses the reaction uroporphyrinogen III + 2 S-adenosyl-L-methionine = precorrin-2 + 2 S-adenosyl-L-homocysteine + H(+). The catalysed reaction is precorrin-2 + NAD(+) = sirohydrochlorin + NADH + 2 H(+). The enzyme catalyses siroheme + 2 H(+) = sirohydrochlorin + Fe(2+). Its pathway is cofactor biosynthesis; adenosylcobalamin biosynthesis; precorrin-2 from uroporphyrinogen III: step 1/1. It participates in cofactor biosynthesis; adenosylcobalamin biosynthesis; sirohydrochlorin from precorrin-2: step 1/1. The protein operates within porphyrin-containing compound metabolism; siroheme biosynthesis; precorrin-2 from uroporphyrinogen III: step 1/1. It functions in the pathway porphyrin-containing compound metabolism; siroheme biosynthesis; siroheme from sirohydrochlorin: step 1/1. Its pathway is porphyrin-containing compound metabolism; siroheme biosynthesis; sirohydrochlorin from precorrin-2: step 1/1. In terms of biological role, multifunctional enzyme that catalyzes the SAM-dependent methylations of uroporphyrinogen III at position C-2 and C-7 to form precorrin-2 via precorrin-1. Then it catalyzes the NAD-dependent ring dehydrogenation of precorrin-2 to yield sirohydrochlorin. Finally, it catalyzes the ferrochelation of sirohydrochlorin to yield siroheme. The sequence is that of Siroheme synthase from Psychrobacter sp. (strain PRwf-1).